Reading from the N-terminus, the 283-residue chain is Phosphatidylserine decarboxylase proenzyme (283 aa).

Catalysis depends on charge relay system; for autoendoproteolytic cleavage activity residues aspartate 96, histidine 152, and serine 250. Serine 250 (schiff-base intermediate with substrate; via pyruvic acid; for decarboxylase activity) is an active-site residue. The residue at position 250 (serine 250) is a Pyruvic acid (Ser); by autocatalysis.

The protein belongs to the phosphatidylserine decarboxylase family. PSD-B subfamily. Prokaryotic type I sub-subfamily. Heterodimer of a large membrane-associated beta subunit and a small pyruvoyl-containing alpha subunit. Pyruvate is required as a cofactor. Post-translationally, is synthesized initially as an inactive proenzyme. Formation of the active enzyme involves a self-maturation process in which the active site pyruvoyl group is generated from an internal serine residue via an autocatalytic post-translational modification. Two non-identical subunits are generated from the proenzyme in this reaction, and the pyruvate is formed at the N-terminus of the alpha chain, which is derived from the carboxyl end of the proenzyme. The autoendoproteolytic cleavage occurs by a canonical serine protease mechanism, in which the side chain hydroxyl group of the serine supplies its oxygen atom to form the C-terminus of the beta chain, while the remainder of the serine residue undergoes an oxidative deamination to produce ammonia and the pyruvoyl prosthetic group on the alpha chain. During this reaction, the Ser that is part of the protease active site of the proenzyme becomes the pyruvoyl prosthetic group, which constitutes an essential element of the active site of the mature decarboxylase.

Its subcellular location is the cell membrane. The enzyme catalyses a 1,2-diacyl-sn-glycero-3-phospho-L-serine + H(+) = a 1,2-diacyl-sn-glycero-3-phosphoethanolamine + CO2. The protein operates within phospholipid metabolism; phosphatidylethanolamine biosynthesis; phosphatidylethanolamine from CDP-diacylglycerol: step 2/2. In terms of biological role, catalyzes the formation of phosphatidylethanolamine (PtdEtn) from phosphatidylserine (PtdSer). The polypeptide is Phosphatidylserine decarboxylase proenzyme (Acinetobacter baumannii (strain ACICU)).